A 640-amino-acid chain; its full sequence is Threonine--tRNA ligase (640 aa).

The TGS domain maps to 1–61 (MPIITLPDGS…TNDAEIQIIT (61 aa)). Positions 242–533 (DHRKLGKKLS…LIENYSGNLP (292 aa)) are catalytic. Positions 333, 384, and 510 each coordinate Zn(2+).

This sequence belongs to the class-II aminoacyl-tRNA synthetase family. Homodimer. Requires Zn(2+) as cofactor.

It localises to the cytoplasm. The enzyme catalyses tRNA(Thr) + L-threonine + ATP = L-threonyl-tRNA(Thr) + AMP + diphosphate + H(+). Functionally, catalyzes the attachment of threonine to tRNA(Thr) in a two-step reaction: L-threonine is first activated by ATP to form Thr-AMP and then transferred to the acceptor end of tRNA(Thr). Also edits incorrectly charged L-seryl-tRNA(Thr). The sequence is that of Threonine--tRNA ligase from Prochlorococcus marinus (strain NATL1A).